Here is a 280-residue protein sequence, read N- to C-terminus: Eukaryotic translation initiation factor 3 subunit F-1 (280 aa).

The region spanning 8–138 (VRVHPVVLFQ…LRAYVCIQLG (131 aa)) is the MPN domain.

It belongs to the eIF-3 subunit F family. As to quaternary structure, component of the eukaryotic translation initiation factor 3 (eIF-3) complex. The eIF-3 complex interacts with pix.

The protein localises to the cytoplasm. Component of the eukaryotic translation initiation factor 3 (eIF-3) complex, which is involved in protein synthesis of a specialized repertoire of mRNAs and, together with other initiation factors, stimulates binding of mRNA and methionyl-tRNAi to the 40S ribosome. The eIF-3 complex specifically targets and initiates translation of a subset of mRNAs involved in cell proliferation. The sequence is that of Eukaryotic translation initiation factor 3 subunit F-1 from Drosophila erecta (Fruit fly).